The following is a 166-amino-acid chain: MKVYIIDYHKDDPKRCTGKKLVKLKIAEFTRVGKGVVLDPFAQITLSNKDKDIVRRIGITIVDTSWNNTSQSEFKNIRGEHRRIPILFAGNPIHYGIAYKLSSIEALIATLYIVDEVEEAIKLSNVVKWGHTFIELNKELLEAYKNKTEEDIKKIEREIIEKILEK.

Positions 17, 62, 84, 99, and 103 each coordinate S-adenosyl-L-methionine.

This sequence belongs to the TDD superfamily. TSR3 family.

The protein resides in the cytoplasm. It carries out the reaction an N(1)-methylpseudouridine in rRNA + S-adenosyl-L-methionine = N(1)-methyl-N(3)-[(3S)-3-amino-3-carboxypropyl]pseudouridine in rRNA + S-methyl-5'-thioadenosine + H(+). Aminocarboxypropyltransferase that catalyzes the aminocarboxypropyl transfer on pseudouridine corresponding to position 914 in M.jannaschii 16S rRNA. It constitutes the last step in biosynthesis of the hypermodified N1-methyl-N3-(3-amino-3-carboxypropyl) pseudouridine (m1acp3-Psi). The chain is 16S rRNA aminocarboxypropyltransferase from Saccharolobus solfataricus (strain ATCC 35092 / DSM 1617 / JCM 11322 / P2) (Sulfolobus solfataricus).